The sequence spans 92 residues: Precursor of elicitor peptide 1 (92 aa).

Residues 1–69 constitute a propeptide that is removed on maturation; the sequence is MEKSDRRSEE…EKEEVVVTSR (69 aa). Positions 35–92 are disordered; that stretch reads HQDSPTTSSPGTSKQPKEEKEDVTMEKEEVVVTSRATKVKAKQRGKEKVSSGRPGQHN. The span at 37–48 shows a compositional bias: polar residues; that stretch reads DSPTTSSPGTSK. A compositionally biased stretch (basic and acidic residues) spans 49 to 64; that stretch reads QPKEEKEDVTMEKEEV.

The protein belongs to the brassicaceae elicitor peptide family. Interacts with its receptor PEPR1.

Its function is as follows. Elicitor of plant defense. Induces the production of plant defensin (PDF1.2) and of H(2)O(2). Promotes resistance to the root fungal pathogen P.irregulare. Triggers the expression of several PROSCOOP genes (e.g. PROSCOOP2, PROSCOOP7, PROSCOOP8, PROSCOOP12 and PROSCOOP13). This Arabidopsis thaliana (Mouse-ear cress) protein is Precursor of elicitor peptide 1.